The chain runs to 195 residues: Cell division protein SepF (195 aa).

The segment at 32–54 is disordered; the sequence is RYSKTNSSETLAPEEEEPIRNRR.

Belongs to the SepF family. As to quaternary structure, homodimer. Interacts with FtsZ.

The protein resides in the cytoplasm. Cell division protein that is part of the divisome complex and is recruited early to the Z-ring. Probably stimulates Z-ring formation, perhaps through the cross-linking of FtsZ protofilaments. Its function overlaps with FtsA. This Gloeothece citriformis (strain PCC 7424) (Cyanothece sp. (strain PCC 7424)) protein is Cell division protein SepF.